A 250-amino-acid polypeptide reads, in one-letter code: Prolactin-7A2 (250 aa).

The signal sequence occupies residues 1–29 (MQLSFSRPRPWTLLLMVVSNLLLWENVSS). N-linked (GlcNAc...) asparagine glycosylation is found at Asn-26, Asn-35, Asn-102, and Asn-134. 2 disulfide bridges follow: Cys-100–Cys-215 and Cys-232–Cys-241.

Belongs to the somatotropin/prolactin family. As to expression, expression restricted to placental tissues. Trophoblast giant cells are found to be the major source.

It is found in the secreted. The chain is Prolactin-7A2 (Prl7a2) from Rattus norvegicus (Rat).